Reading from the N-terminus, the 257-residue chain is Imidazole glycerol phosphate synthase subunit HisF (257 aa).

Active-site residues include Asp-12 and Asp-131.

It belongs to the HisA/HisF family. In terms of assembly, heterodimer of HisH and HisF.

Its subcellular location is the cytoplasm. The enzyme catalyses 5-[(5-phospho-1-deoxy-D-ribulos-1-ylimino)methylamino]-1-(5-phospho-beta-D-ribosyl)imidazole-4-carboxamide + L-glutamine = D-erythro-1-(imidazol-4-yl)glycerol 3-phosphate + 5-amino-1-(5-phospho-beta-D-ribosyl)imidazole-4-carboxamide + L-glutamate + H(+). It functions in the pathway amino-acid biosynthesis; L-histidine biosynthesis; L-histidine from 5-phospho-alpha-D-ribose 1-diphosphate: step 5/9. Its function is as follows. IGPS catalyzes the conversion of PRFAR and glutamine to IGP, AICAR and glutamate. The HisF subunit catalyzes the cyclization activity that produces IGP and AICAR from PRFAR using the ammonia provided by the HisH subunit. In Burkholderia orbicola (strain MC0-3), this protein is Imidazole glycerol phosphate synthase subunit HisF.